Reading from the N-terminus, the 142-residue chain is Large ribosomal subunit protein uL11 (142 aa).

This sequence belongs to the universal ribosomal protein uL11 family. As to quaternary structure, part of the ribosomal stalk of the 50S ribosomal subunit. Interacts with L10 and the large rRNA to form the base of the stalk. L10 forms an elongated spine to which L12 dimers bind in a sequential fashion forming a multimeric L10(L12)X complex. One or more lysine residues are methylated.

Its function is as follows. Forms part of the ribosomal stalk which helps the ribosome interact with GTP-bound translation factors. In Mycolicibacterium vanbaalenii (strain DSM 7251 / JCM 13017 / BCRC 16820 / KCTC 9966 / NRRL B-24157 / PYR-1) (Mycobacterium vanbaalenii), this protein is Large ribosomal subunit protein uL11.